The primary structure comprises 249 residues: Bax inhibitor 1 (249 aa).

The next 6 helical transmembrane spans lie at 39–59 (LVYL…YLHV), 65–85 (GMLT…VPVF), 93–113 (ILLA…KLAV), 119–139 (ILVT…CAAI), 151–171 (GLLS…SIFG), and 213–233 (HALT…VIML).

The protein belongs to the BI1 family. In terms of tissue distribution, ubiquitous.

The protein localises to the membrane. In terms of biological role, suppressor of apoptosis. This is Bax inhibitor 1 (BI1) from Oryza sativa subsp. japonica (Rice).